The primary structure comprises 430 residues: Enolase (430 aa).

Glutamine 164 is a binding site for (2R)-2-phosphoglycerate. Catalysis depends on glutamate 208, which acts as the Proton donor. Residues aspartate 245, glutamate 288, and aspartate 315 each coordinate Mg(2+). (2R)-2-phosphoglycerate is bound by residues lysine 340, arginine 369, serine 370, and lysine 391. Lysine 340 functions as the Proton acceptor in the catalytic mechanism.

Belongs to the enolase family. Mg(2+) is required as a cofactor.

It is found in the cytoplasm. The protein localises to the secreted. The protein resides in the cell surface. The catalysed reaction is (2R)-2-phosphoglycerate = phosphoenolpyruvate + H2O. It participates in carbohydrate degradation; glycolysis; pyruvate from D-glyceraldehyde 3-phosphate: step 4/5. Catalyzes the reversible conversion of 2-phosphoglycerate (2-PG) into phosphoenolpyruvate (PEP). It is essential for the degradation of carbohydrates via glycolysis. The sequence is that of Enolase from Thermococcus onnurineus (strain NA1).